We begin with the raw amino-acid sequence, 277 residues long: Phosphoenolpyruvate synthase regulatory protein (277 aa).

Residue 157–164 (GVSRCGKT) coordinates ADP.

This sequence belongs to the pyruvate, phosphate/water dikinase regulatory protein family. PSRP subfamily.

It carries out the reaction [pyruvate, water dikinase] + ADP = [pyruvate, water dikinase]-phosphate + AMP + H(+). It catalyses the reaction [pyruvate, water dikinase]-phosphate + phosphate + H(+) = [pyruvate, water dikinase] + diphosphate. In terms of biological role, bifunctional serine/threonine kinase and phosphorylase involved in the regulation of the phosphoenolpyruvate synthase (PEPS) by catalyzing its phosphorylation/dephosphorylation. This Escherichia coli O6:K15:H31 (strain 536 / UPEC) protein is Phosphoenolpyruvate synthase regulatory protein.